The primary structure comprises 357 residues: Holliday junction branch migration complex subunit RuvB (357 aa).

Low complexity predominate over residues Met1 to Pro15. A disordered region spans residues Met1 to Ile30. The tract at residues Asp13–Tyr195 is large ATPase domain (RuvB-L). ATP-binding positions include Leu34, Arg35, Gly76, Lys79, Thr80, Thr81, Glu142 to Phe144, Arg185, Tyr195, and Arg232. Thr80 contributes to the Mg(2+) binding site. The tract at residues Asn196–Asp266 is small ATPAse domain (RuvB-S). The head domain (RuvB-H) stretch occupies residues Pro269 to Lys357. DNA-binding residues include Arg305, Arg324, and Arg329.

Belongs to the RuvB family. Homohexamer. Forms an RuvA(8)-RuvB(12)-Holliday junction (HJ) complex. HJ DNA is sandwiched between 2 RuvA tetramers; dsDNA enters through RuvA and exits via RuvB. An RuvB hexamer assembles on each DNA strand where it exits the tetramer. Each RuvB hexamer is contacted by two RuvA subunits (via domain III) on 2 adjacent RuvB subunits; this complex drives branch migration. In the full resolvosome a probable DNA-RuvA(4)-RuvB(12)-RuvC(2) complex forms which resolves the HJ.

Its subcellular location is the cytoplasm. The catalysed reaction is ATP + H2O = ADP + phosphate + H(+). In terms of biological role, the RuvA-RuvB-RuvC complex processes Holliday junction (HJ) DNA during genetic recombination and DNA repair, while the RuvA-RuvB complex plays an important role in the rescue of blocked DNA replication forks via replication fork reversal (RFR). RuvA specifically binds to HJ cruciform DNA, conferring on it an open structure. The RuvB hexamer acts as an ATP-dependent pump, pulling dsDNA into and through the RuvAB complex. RuvB forms 2 homohexamers on either side of HJ DNA bound by 1 or 2 RuvA tetramers; 4 subunits per hexamer contact DNA at a time. Coordinated motions by a converter formed by DNA-disengaged RuvB subunits stimulates ATP hydrolysis and nucleotide exchange. Immobilization of the converter enables RuvB to convert the ATP-contained energy into a lever motion, pulling 2 nucleotides of DNA out of the RuvA tetramer per ATP hydrolyzed, thus driving DNA branch migration. The RuvB motors rotate together with the DNA substrate, which together with the progressing nucleotide cycle form the mechanistic basis for DNA recombination by continuous HJ branch migration. Branch migration allows RuvC to scan DNA until it finds its consensus sequence, where it cleaves and resolves cruciform DNA. The polypeptide is Holliday junction branch migration complex subunit RuvB (Bordetella pertussis (strain Tohama I / ATCC BAA-589 / NCTC 13251)).